A 203-amino-acid chain; its full sequence is Large ribosomal subunit protein uL18 (203 aa).

It belongs to the universal ribosomal protein uL18 family. As to quaternary structure, part of the 50S ribosomal subunit. Contacts the 5S and 23S rRNAs.

This is one of the proteins that bind and probably mediate the attachment of the 5S RNA into the large ribosomal subunit, where it forms part of the central protuberance. In Pyrococcus furiosus (strain ATCC 43587 / DSM 3638 / JCM 8422 / Vc1), this protein is Large ribosomal subunit protein uL18.